The primary structure comprises 495 residues: MSEEMNDQMQVRRQKLQELIDLGIDPFGHRFNRSSTSSELKEQWDQFSKEELHEKEDESHVSIAGRLMTKRGKGKAGFAHIQDLKGQIQIYVRKDQVGDDQFNIWKMADLGDIIGVEGVMFKTNTGEISVKAKSFTLLSKSLRPLPDKFHGLQDIEQRYRQRYLDLITNEDSTQTFINRSKIIQEMRNYLNKQGFLEVETPMMHQIAGGAAARPFVTHHNALDATLYMRIAIELHLKRLIVGGLEKVYEIGRVFRNEGVSTRHNPEFTMIELYEAYADYHDIMDLTENMVRHIAQEVFGSAKVQYNDEEIDLESSWKRLHIVDAVKEVTGVDFYNVNSDEEAIRLAKEHDIEITENMKYGHILNEFFEQKVEETLIQPTFIYGHPIEISPLAKKNPNDERFTDRFELFIVGREHANAFTELNDPIDQRQRFEAQLVEKEQGNDEAHDMDEDYIEALEYGMPPTGGLGIGIDRLVMLLTDSPSIRDVLLFPYMRQK.

Mg(2+)-binding residues include E406 and E413.

It belongs to the class-II aminoacyl-tRNA synthetase family. As to quaternary structure, homodimer. Mg(2+) serves as cofactor.

The protein localises to the cytoplasm. It catalyses the reaction tRNA(Lys) + L-lysine + ATP = L-lysyl-tRNA(Lys) + AMP + diphosphate. The polypeptide is Lysine--tRNA ligase (Staphylococcus epidermidis (strain ATCC 35984 / DSM 28319 / BCRC 17069 / CCUG 31568 / BM 3577 / RP62A)).